We begin with the raw amino-acid sequence, 1244 residues long: ATP-dependent RNA helicase DHX8 (1244 aa).

A Glycyl lysine isopeptide (Lys-Gly) (interchain with G-Cter in SUMO2) cross-link involves residue Lys140. Disordered regions lie at residues 152 to 289 and 361 to 396; these read LMPS…PAIG and DVDQ…RPTH. Basic and acidic residues predominate over residues 160 to 169; it reads EKQRDPEHRD. The span at 170 to 179 shows a compositional bias: basic residues; that stretch reads RTKKKKRSRS. Positions 180–220 are enriched in basic and acidic residues; sequence RDRDRDRDRDRDRDRDRDRDRDKDRERDRDRERDRERDRER. Basic residues predominate over residues 221-234; the sequence is DHKRRHRSRSRSHS. Residues 256–283 show a composition bias toward basic and acidic residues; it reads FKDRKDREKYGERNLDRWRDKHVDRPPP. The S1 motif domain maps to 289–360; that stretch reads GDIYNGKVTS…TGTKTSLSMK (72 aa). Residues 386–395 are compositionally biased toward basic and acidic residues; sequence TSMRNPDRPT. Ser419 carries the phosphoserine modification. Lys423 is covalently cross-linked (Glycyl lysine isopeptide (Lys-Gly) (interchain with G-Cter in SUMO2)). Ser484 is subject to Phosphoserine. The region spanning 599-762 is the Helicase ATP-binding domain; sequence VQAVHDNQIL…FYEAPIFTIP (164 aa). 612–619 is a binding site for ATP; it reads GETGSGKT. The short motif at 709-712 is the DEAH box element; the sequence is DEAH. The Helicase C-terminal domain maps to 780 to 960; the sequence is YLDASLITVM…STVLSLKAMG (181 aa).

The protein belongs to the DEAD box helicase family. DEAH subfamily. DDX8/PRP22 sub-subfamily. As to quaternary structure, identified in the spliceosome C complex. Interacts with ARRB2; the interaction is detected in the nucleus upon OR1D2 stimulation. Interacts with SRRM2. Interacts with CACTIN.

It localises to the nucleus. The catalysed reaction is ATP + H2O = ADP + phosphate + H(+). Functionally, involved in pre-mRNA splicing as component of the spliceosome. Facilitates nuclear export of spliced mRNA by releasing the RNA from the spliceosome. This is ATP-dependent RNA helicase DHX8 (Dhx8) from Mus musculus (Mouse).